The sequence spans 156 residues: SsrA-binding protein (156 aa).

Belongs to the SmpB family.

The protein localises to the cytoplasm. Its function is as follows. Required for rescue of stalled ribosomes mediated by trans-translation. Binds to transfer-messenger RNA (tmRNA), required for stable association of tmRNA with ribosomes. tmRNA and SmpB together mimic tRNA shape, replacing the anticodon stem-loop with SmpB. tmRNA is encoded by the ssrA gene; the 2 termini fold to resemble tRNA(Ala) and it encodes a 'tag peptide', a short internal open reading frame. During trans-translation Ala-aminoacylated tmRNA acts like a tRNA, entering the A-site of stalled ribosomes, displacing the stalled mRNA. The ribosome then switches to translate the ORF on the tmRNA; the nascent peptide is terminated with the 'tag peptide' encoded by the tmRNA and targeted for degradation. The ribosome is freed to recommence translation, which seems to be the essential function of trans-translation. In Clostridium botulinum (strain Alaska E43 / Type E3), this protein is SsrA-binding protein.